The following is a 166-amino-acid chain: Cytochrome c-type biogenesis protein CcmE (166 aa).

Topologically, residues 1-7 are cytoplasmic; that stretch reads MTRKQKR. A helical; Signal-anchor for type II membrane protein membrane pass occupies residues 8–28; that stretch reads LALIASGAVVVSLAVGLVMFA. The Periplasmic segment spans residues 29-166; sequence LRDNIVFFYS…QTAPQGAQAY (138 aa). The heme site is built by H122 and Y126. The tract at residues 139 to 166 is disordered; it reads GVWQEEGKSEGKPSAIPAQTAPQGAQAY.

The protein belongs to the CcmE/CycJ family.

Its subcellular location is the cell inner membrane. Functionally, heme chaperone required for the biogenesis of c-type cytochromes. Transiently binds heme delivered by CcmC and transfers the heme to apo-cytochromes in a process facilitated by CcmF and CcmH. This Methylocella silvestris (strain DSM 15510 / CIP 108128 / LMG 27833 / NCIMB 13906 / BL2) protein is Cytochrome c-type biogenesis protein CcmE.